Reading from the N-terminus, the 205-residue chain is Probable thymidylate kinase (205 aa).

7–14 serves as a coordination point for ATP; it reads GIDGAGKS.

It belongs to the thymidylate kinase family.

It catalyses the reaction dTMP + ATP = dTDP + ADP. In Thermococcus kodakarensis (strain ATCC BAA-918 / JCM 12380 / KOD1) (Pyrococcus kodakaraensis (strain KOD1)), this protein is Probable thymidylate kinase.